The primary structure comprises 617 residues: Manganese lipoxygenase (617 aa).

A signal peptide spans 1 to 17 (MRIGLLAFAVAARYVEA). Residues 23–48 (GEEVASSSAPTTLPSTSSSSALPSPT) are compositionally biased toward low complexity. The interval 23 to 59 (GEEVASSSAPTTLPSTSSSSALPSPTKYTLPHEDPNP) is disordered. N-linked (GlcNAc...) asparagine glycans are attached at residues N109, N119, and N160. Residues 122–617 (LRDIQSHGGL…PAVNPFFLSI (496 aa)) form the Lipoxygenase domain. Residues H293, H297, H479, and N483 each coordinate Mn(2+). N-linked (GlcNAc...) asparagine glycosylation is present at N547. I617 is a binding site for Mn(2+).

This sequence belongs to the lipoxygenase family. Manganese lipoxygenase subfamily. Mn(2+) is required as a cofactor.

Its subcellular location is the secreted. The enzyme catalyses (9Z,12Z)-octadecadienoate + O2 = (9S)-hydroperoxy-(10E,12Z)-octadecadienoate. It carries out the reaction (9Z,12Z)-octadecadienoate + O2 = (11S)-hydroperoxy-(9Z,12Z)-octadecadienoate. The catalysed reaction is (9Z,12Z)-octadecadienoate + O2 = (13R)-hydroperoxy-(9Z,11E)-octadecadienoate. It catalyses the reaction (9Z,12Z,15Z)-octadecatrienoate + O2 = (9S)-hydroperoxy-(10E,12Z,15Z)-octadecatrienoate. The enzyme catalyses (9Z,12Z,15Z)-octadecatrienoate + O2 = (11R)-hydroperoxy-(9Z,12Z,15Z)-octadecatrienoate. It carries out the reaction (9Z,12Z,15Z)-octadecatrienoate + O2 = (13R)-hydroperoxy-(9Z,11E,15Z)-octadecatrienoate. Lipoxygenase that metabolizes linoleic and alpha-linolenic acids to 9S-, 11- and 13R-hydroperoxy fatty acids. At the end of lipoxygenation, the intermediate products 11S-HPODE and 13R-HPODE from linoleic acid are then transformed into 9S-HPODE as the final product. The intermediate product 11R-HPOTrE from alpha-linolenic acid is transformed into 9S-HPOTrE and 13R-HPOTrE as the final products. 9S-HPOTrE is further oxidized by the enzyme to 9,16-DiHOTrE as the end product. Also acts on gamma-linolenic acid producing 9-HOTrE(n-6) as the main metabolite. The protein is Manganese lipoxygenase of Nakataea oryzae (Rice stem rot fungus).